Here is a 162-residue protein sequence, read N- to C-terminus: uncharacterized protein (162 aa).

An N-terminal signal peptide occupies residues 1–21 (MEGIMKKFFALMTLIAGISFS). Residues 32–118 (VIRESKFIAK…KKAELEKMVF (87 aa)) are a coiled coil.

This sequence belongs to the Skp family.

This is an uncharacterized protein from Aquifex aeolicus (strain VF5).